The sequence spans 157 residues: Stalk-specific protein A (157 aa).

Residues 1–19 form the signal peptide; the sequence is MRSILILLSLLLTIAFASA.

It is found in the secreted. The sequence is that of Stalk-specific protein A (staA) from Dictyostelium discoideum (Social amoeba).